We begin with the raw amino-acid sequence, 407 residues long: Elongation factor Tu (407 aa).

Residues 10–217 (KPHVNVGTIG…TLDTYIPDPE (208 aa)) form the tr-type G domain. Positions 19–26 (GHVDHGKT) are G1. Position 19–26 (19–26 (GHVDHGKT)) interacts with GTP. Residue Thr26 coordinates Mg(2+). The G2 stretch occupies residues 60 to 64 (GITIS). The tract at residues 81 to 84 (DCPG) is G3. Residues 81–85 (DCPGH) and 136–139 (NKSD) contribute to the GTP site. The tract at residues 136–139 (NKSD) is G4. Positions 184-186 (SAL) are G5.

The protein belongs to the TRAFAC class translation factor GTPase superfamily. Classic translation factor GTPase family. EF-Tu/EF-1A subfamily. In terms of assembly, monomer.

It is found in the cytoplasm. It catalyses the reaction GTP + H2O = GDP + phosphate + H(+). Its function is as follows. GTP hydrolase that promotes the GTP-dependent binding of aminoacyl-tRNA to the A-site of ribosomes during protein biosynthesis. The polypeptide is Elongation factor Tu (Marinomonas sp. (strain MWYL1)).